A 491-amino-acid chain; its full sequence is mRNA cleavage and polyadenylation factor clp1 (491 aa).

The ATP site is built by E28 and K78. Positions R128–P160 are disordered. The span at A130–G148 shows a compositional bias: low complexity. Residue G171–S176 coordinates ATP.

The protein belongs to the Clp1 family. Clp1 subfamily. In terms of assembly, component of a pre-mRNA cleavage factor complex. Interacts directly with PCF11.

The protein resides in the nucleus. Functionally, required for endonucleolytic cleavage during polyadenylation-dependent pre-mRNA 3'-end formation. The protein is mRNA cleavage and polyadenylation factor clp1 (paa-7) of Neurospora crassa (strain ATCC 24698 / 74-OR23-1A / CBS 708.71 / DSM 1257 / FGSC 987).